The following is a 439-amino-acid chain: Secreted aspartic protease LUC8 (439 aa).

An N-terminal signal peptide occupies residues 1–20 (MMHAFHHLAVLLIGSLPASA). Residues Asn-33 and Asn-54 are each glycosylated (N-linked (GlcNAc...) asparagine). Residues 51–435 (YLFNITVGTP…DFETQSFGLA (385 aa)) enclose the Peptidase A1 domain. The active site involves Asp-69. 4 N-linked (GlcNAc...) asparagine glycosylation sites follow: Asn-110, Asn-126, Asn-179, and Asn-289. Asp-300 is an active-site residue. Residues Asn-329 and Asn-373 are each glycosylated (N-linked (GlcNAc...) asparagine). A disulfide bridge links Cys-355 with Cys-391.

The protein belongs to the peptidase A1 family.

Its subcellular location is the secreted. Its function is as follows. Secreted aspartic protease; part of the gene cluster that mediates the biosynthesis of the mycotoxin lucilactaene and the lucilactaene-related compound NG-391 that act as cell cycle inhibitors with potent growth inhibitory activity against malarial parasites, moderate growth inhibitory activity against cancer cells, and no activity against bacteria and fungi. Within the cluster, LUC7 and LUC8 encode proteins which are not commonly involved in the biosynthesis of secondary metabolites and are not essential for lucilactaene biosynthesis. The sequence is that of Secreted aspartic protease LUC8 from Fusarium sp.